Here is a 310-residue protein sequence, read N- to C-terminus: Bifunctional phosphoglucose/phosphomannose isomerase (310 aa).

In terms of domain architecture, SIS spans 22–152 (FDGSFRTGTF…IRPKHEDIEE (131 aa)). Glycine 41, serine 42, serine 80, serine 82, threonine 85, and arginine 128 together coordinate D-fructose 6-phosphate. Glutamate 202 functions as the Proton acceptor in the catalytic mechanism. The D-fructose 6-phosphate site is built by histidine 218 and lysine 306. The active-site Proton donor is histidine 218. Lysine 306 acts as the Proton acceptor in catalysis.

It belongs to the PGI/PMI family. Homodimer.

It carries out the reaction alpha-D-glucose 6-phosphate = beta-D-fructose 6-phosphate. The catalysed reaction is D-mannose 6-phosphate = D-fructose 6-phosphate. Its activity is regulated as follows. Inhibited by low concentrations of erythrose 4-phosphate and 6-phosphogluconate. Functionally, dual specificity isomerase that catalyzes the isomerization of both glucose-6-phosphate and mannose-6-phosphate to fructose-6-phosphate with similar catalytic efficiency. This is Bifunctional phosphoglucose/phosphomannose isomerase from Thermoplasma acidophilum (strain ATCC 25905 / DSM 1728 / JCM 9062 / NBRC 15155 / AMRC-C165).